The sequence spans 295 residues: Shikimate dehydrogenase (NADP(+)) (295 aa).

Shikimate contacts are provided by residues 22-24 and Ser-69; that span reads SLS. The Proton acceptor role is filled by Lys-73. The shikimate site is built by Asn-94 and Asp-111. NADP(+) is bound by residues 135-139 and Val-236; that span reads GAGGA. Position 238 (Tyr-238) interacts with shikimate. Residue Gly-260 coordinates NADP(+).

The protein belongs to the shikimate dehydrogenase family. Homodimer.

The catalysed reaction is shikimate + NADP(+) = 3-dehydroshikimate + NADPH + H(+). The protein operates within metabolic intermediate biosynthesis; chorismate biosynthesis; chorismate from D-erythrose 4-phosphate and phosphoenolpyruvate: step 4/7. In terms of biological role, involved in the biosynthesis of the chorismate, which leads to the biosynthesis of aromatic amino acids. Catalyzes the reversible NADPH linked reduction of 3-dehydroshikimate (DHSA) to yield shikimate (SA). This is Shikimate dehydrogenase (NADP(+)) from Streptococcus uberis (strain ATCC BAA-854 / 0140J).